Reading from the N-terminus, the 551-residue chain is Probable alpha-glucosidase (551 aa).

Residue Asp-212 is the Nucleophile of the active site. The Proton donor role is filled by Glu-272.

It belongs to the glycosyl hydrolase 13 family.

It carries out the reaction Hydrolysis of terminal, non-reducing (1-&gt;4)-linked alpha-D-glucose residues with release of alpha-D-glucose.. This is Probable alpha-glucosidase (aglA) from Rhizobium meliloti (strain 1021) (Ensifer meliloti).